A 258-amino-acid chain; its full sequence is MLNLTGKNALVTGIANNRSIAWGIAQQLHAAGANLGITYLPDERGKFEKKVSELVEPLNPSLFLPCNVQNDEQIQSTFDTIRDKWGRLDILIHCLAFANRDDLTGDFSQTSRAGFATALDISTFSLVQLSGAAKPLMTEGGSIITLSYLGGVRAVPNYNVMGVAKAGLEASVRYLASELGSQNIRVNAISAGPIRTLASSAVGGILDMIHHVEQVAPLRRTVTQLEVGNTAAFLASDLASGITGQVLYVDAGYEIMGM.

NAD(+) is bound by residues G13, 19–20 (SI), 67–68 (NV), and L95. A98 provides a ligand contact to substrate. Residues Y148 and Y158 each act as proton acceptor in the active site. Residues K165 and 194–198 (IRTLA) contribute to the NAD(+) site.

This sequence belongs to the short-chain dehydrogenases/reductases (SDR) family. FabI subfamily. In terms of assembly, homotetramer.

It catalyses the reaction a 2,3-saturated acyl-[ACP] + NAD(+) = a (2E)-enoyl-[ACP] + NADH + H(+). It functions in the pathway lipid metabolism; fatty acid biosynthesis. Its function is as follows. Catalyzes the reduction of a carbon-carbon double bond in an enoyl moiety that is covalently linked to an acyl carrier protein (ACP). Involved in the elongation cycle of fatty acid which are used in the lipid metabolism. The polypeptide is Enoyl-[acyl-carrier-protein] reductase [NADH] FabI (fabI) (Nostoc sp. (strain PCC 7120 / SAG 25.82 / UTEX 2576)).